The following is a 413-amino-acid chain: Serine/threonine transporter SstT (413 aa).

9 helical membrane passes run 21 to 41 (IGLL…SALG), 61 to 81 (SVAP…KKVG), 89 to 109 (IIYL…FASF), 146 to 166 (ITAL…GLGI), 189 to 209 (IVHF…ASTL), 224 to 244 (LAVL…IIVF), 305 to 325 (MGGA…TLGI), 337 to 357 (LVAS…LLLI), and 363 to 383 (LFGI…IIGV).

The protein belongs to the dicarboxylate/amino acid:cation symporter (DAACS) (TC 2.A.23) family.

The protein resides in the cell inner membrane. The enzyme catalyses L-serine(in) + Na(+)(in) = L-serine(out) + Na(+)(out). It carries out the reaction L-threonine(in) + Na(+)(in) = L-threonine(out) + Na(+)(out). Its function is as follows. Involved in the import of serine and threonine into the cell, with the concomitant import of sodium (symport system). The polypeptide is Serine/threonine transporter SstT (Mannheimia succiniciproducens (strain KCTC 0769BP / MBEL55E)).